We begin with the raw amino-acid sequence, 750 residues long: Photosystem I P700 chlorophyll a apoprotein A1 (750 aa).

The next 8 helical transmembrane spans lie at 70–93 (VFSA…FHGA), 156–179 (LYCT…FHYH), 195–219 (LNHH…HVSL), 291–309 (IAHH…GHMY), 346–369 (WHAQ…HHMY), 385–411 (LSLF…IFMV), 433–455 (AIIS…LYIH), and 531–549 (FLVH…LILL). [4Fe-4S] cluster contacts are provided by cysteine 573 and cysteine 582. The next 2 helical transmembrane spans lie at 589-610 (HVFL…HFSW) and 664-686 (LSAY…MFLF). Histidine 675 is a chlorophyll a' binding site. Residues methionine 683 and tyrosine 691 each coordinate chlorophyll a. Residue tryptophan 692 coordinates phylloquinone. A helical transmembrane segment spans residues 724-744 (AVGVTHYLLGGIATTWAFFLA).

This sequence belongs to the PsaA/PsaB family. As to quaternary structure, the PsaA/B heterodimer binds the P700 chlorophyll special pair and subsequent electron acceptors. PSI consists of a core antenna complex that captures photons, and an electron transfer chain that converts photonic excitation into a charge separation. The eukaryotic PSI reaction center is composed of at least 11 subunits. It depends on P700 is a chlorophyll a/chlorophyll a' dimer, A0 is one or more chlorophyll a, A1 is one or both phylloquinones and FX is a shared 4Fe-4S iron-sulfur center. as a cofactor.

Its subcellular location is the plastid. It localises to the chloroplast thylakoid membrane. The enzyme catalyses reduced [plastocyanin] + hnu + oxidized [2Fe-2S]-[ferredoxin] = oxidized [plastocyanin] + reduced [2Fe-2S]-[ferredoxin]. In terms of biological role, psaA and PsaB bind P700, the primary electron donor of photosystem I (PSI), as well as the electron acceptors A0, A1 and FX. PSI is a plastocyanin-ferredoxin oxidoreductase, converting photonic excitation into a charge separation, which transfers an electron from the donor P700 chlorophyll pair to the spectroscopically characterized acceptors A0, A1, FX, FA and FB in turn. Oxidized P700 is reduced on the lumenal side of the thylakoid membrane by plastocyanin. This Saccharum hybrid (Sugarcane) protein is Photosystem I P700 chlorophyll a apoprotein A1.